A 501-amino-acid polypeptide reads, in one-letter code: Lysine--tRNA ligase (501 aa).

Mg(2+)-binding residues include Glu-411 and Glu-418.

The protein belongs to the class-II aminoacyl-tRNA synthetase family. Homodimer. It depends on Mg(2+) as a cofactor.

It is found in the cytoplasm. It catalyses the reaction tRNA(Lys) + L-lysine + ATP = L-lysyl-tRNA(Lys) + AMP + diphosphate. In Shewanella woodyi (strain ATCC 51908 / MS32), this protein is Lysine--tRNA ligase.